The following is a 303-amino-acid chain: Paired immunoglobulin-like type 2 receptor alpha (303 aa).

The first 19 residues, 1–19 (MGRPLLLPLLPLLLPPAFL), serve as a signal peptide directing secretion. At 20–197 (QPSGSTGSGP…DSWHISLETA (178 aa)) the chain is on the extracellular side. Residues 32 to 150 (LYGVTQPKHL…SIEGTKLSIT (119 aa)) enclose the Ig-like V-type domain. The N-linked (GlcNAc...) asparagine glycan is linked to Asn-100. The helical transmembrane segment at 198–218 (VGVAVAVTVLGIMILGLICLL) threads the bilayer. At 219–303 (RWRRRKGQQR…NETLYSVLKA (85 aa)) the chain is on the cytoplasmic side. A disordered region spans residues 226 to 296 (QQRTKATTPA…RPLKSPQNET (71 aa)). 2 consecutive short sequence motifs (ITIM motif) follow at residues 267–272 (IVYASL) and 296–301 (TLYSVL).

As to quaternary structure, monomer. Interacts with PTPN6/SHP-1 and PTPN11/SHP-2 upon tyrosine phosphorylation. (Microbial infection) Interacts with herpes simplex virus 1 glycoprotein B. Post-translationally, according to PubMed:10660620, N- and O-glycosylated. According to PubMed:10903717, only N-glycosylated. In terms of processing, phosphorylated on tyrosine residues. As to expression, predominantly detected in hemopoietic tissues and is expressed by monocytes, macrophages, and granulocytes, but not by lymphocytes. Also strongly expressed by dendritic cells (DC); preferentially by CD14+/CD1a- DC derived from CD34+ progenitors. Also expressed by CD11c+ blood and tonsil DC, but not by CD11c- DC precursors.

It localises to the cell membrane. It is found in the secreted. Paired receptors consist of highly related activating and inhibitory receptors and are widely involved in the regulation of the immune system. PILRA is thought to act as a cellular signaling inhibitory receptor by recruiting cytoplasmic phosphatases like PTPN6/SHP-1 and PTPN11/SHP-2 via their SH2 domains that block signal transduction through dephosphorylation of signaling molecules. Receptor for PIANP. In terms of biological role, (Microbial infection) Acts as an entry co-receptor for herpes simplex virus 1. The sequence is that of Paired immunoglobulin-like type 2 receptor alpha (PILRA) from Homo sapiens (Human).